A 128-amino-acid polypeptide reads, in one-letter code: L-ectoine synthase (128 aa).

This sequence belongs to the ectoine synthase family.

The enzyme catalyses (2S)-4-acetamido-2-aminobutanoate = L-ectoine + H2O. It participates in amine and polyamine biosynthesis; ectoine biosynthesis; L-ectoine from L-aspartate 4-semialdehyde: step 3/3. Catalyzes the circularization of gamma-N-acetyl-alpha,gamma-diaminobutyric acid (ADABA) to ectoine (1,4,5,6-tetrahydro-2-methyl-4-pyrimidine carboxylic acid), which is an excellent osmoprotectant. The protein is L-ectoine synthase of Vibrio parahaemolyticus serotype O3:K6 (strain RIMD 2210633).